Consider the following 144-residue polypeptide: Large ribosomal subunit protein uL13 (144 aa).

This sequence belongs to the universal ribosomal protein uL13 family. Part of the 50S ribosomal subunit.

In terms of biological role, this protein is one of the early assembly proteins of the 50S ribosomal subunit, although it is not seen to bind rRNA by itself. It is important during the early stages of 50S assembly. The chain is Large ribosomal subunit protein uL13 from Clostridium tetani (strain Massachusetts / E88).